Here is a 144-residue protein sequence, read N- to C-terminus: Large ribosomal subunit protein uL15 (144 aa).

Residues 1-54 (MRLNTLSPAAGSKHAPKRVGRGMGSGLGKTAGRGHKGQKSRSGGGVRPGFEGGQ) form a disordered region. 2 stretches are compositionally biased toward gly residues: residues 21 to 31 (RGMGSGLGKTA) and 42 to 52 (SGGGVRPGFEG).

It belongs to the universal ribosomal protein uL15 family. Part of the 50S ribosomal subunit.

In terms of biological role, binds to the 23S rRNA. The chain is Large ribosomal subunit protein uL15 from Shewanella baltica (strain OS223).